Here is a 337-residue protein sequence, read N- to C-terminus: F420-dependent glucose-6-phosphate dehydrogenase (337 aa).

Coenzyme F420-(gamma-Glu)n is bound at residue D40. The Proton donor role is filled by H41. Residues T77 and 108-109 (SG) each bind coenzyme F420-(gamma-Glu)n. E110 serves as the catalytic Proton acceptor. Residues N113, 178-179 (GG), and 181-182 (VV) each bind coenzyme F420-(gamma-Glu)n. Positions 196, 199, 260, and 284 each coordinate substrate.

It belongs to the F420-dependent glucose-6-phosphate dehydrogenase family. Homodimer.

The enzyme catalyses oxidized coenzyme F420-(gamma-L-Glu)(n) + D-glucose 6-phosphate + H(+) = 6-phospho-D-glucono-1,5-lactone + reduced coenzyme F420-(gamma-L-Glu)(n). In terms of biological role, catalyzes the coenzyme F420-dependent oxidation of glucose 6-phosphate (G6P) to 6-phosphogluconolactone. In Rhodococcus erythropolis (strain PR4 / NBRC 100887), this protein is F420-dependent glucose-6-phosphate dehydrogenase.